Here is a 286-residue protein sequence, read N- to C-terminus: Mitochondrial dicarboxylate carrier (286 aa).

3 Solcar repeats span residues 7–87 (SRWY…MRDY), 100–187 (SKVL…AKQL), and 196–279 (DNIF…LRKH). A run of 3 helical transmembrane segments spans residues 9–29 (WYFG…LDLL), 62–81 (GLSA…FAIY), and 102–122 (VLLG…ADLV). K158 is subject to N6-acetyllysine. Transmembrane regions (helical) follow at residues 162 to 181 (GATM…LSCY), 202 to 222 (FLSS…LDVL), and 254 to 274 (GLVP…MFLE).

The protein belongs to the mitochondrial carrier (TC 2.A.29) family. Expressed most strongly in liver, then kidney, and at lower levels in heart and brain.

Its subcellular location is the mitochondrion inner membrane. It catalyses the reaction (S)-malate(in) + phosphate(out) = (S)-malate(out) + phosphate(in). It carries out the reaction malonate(out) + (S)-malate(in) = malonate(in) + (S)-malate(out). The catalysed reaction is (S)-malate(in) + succinate(out) = (S)-malate(out) + succinate(in). The enzyme catalyses (S)-malate(in) + sulfate(out) = (S)-malate(out) + sulfate(in). It catalyses the reaction malonate(out) + phosphate(in) = malonate(in) + phosphate(out). It carries out the reaction succinate(out) + phosphate(in) = succinate(in) + phosphate(out). The catalysed reaction is sulfate(out) + phosphate(in) = sulfate(in) + phosphate(out). The enzyme catalyses malonate(out) + succinate(in) = malonate(in) + succinate(out). Functionally, catalyzes the electroneutral exchange or flux of physiologically important metabolites such as dicarboxylates (malonate, malate, succinate), inorganic sulfur-containing anions, and phosphate, across mitochondrial inner membrane. Plays an important role in gluconeogenesis, fatty acid metabolism, urea synthesis, and sulfur metabolism, particularly in liver, by supplying the substrates for the different metabolic processes. Regulates fatty acid release from adipocytes, and contributes to systemic insulin sensitivity. In Rattus norvegicus (Rat), this protein is Mitochondrial dicarboxylate carrier.